The following is a 347-amino-acid chain: Pre-B-cell leukemia transcription factor 1 (347 aa).

Residues 1 to 40 form a disordered region; sequence MDDQPRLMHSHPGVGMAGHPSLSQHMQDGTGANEGEGGRK. One can recognise a PBC domain in the interval 38-232; the sequence is GRKQDIGDIL…VMILRSRFLD (195 aa). The tract at residues 45-124 is PBC-A; that stretch reads DILQQIMTIT…EGVAGPEKGG (80 aa). Positions 127–232 are PBC-B; sequence AAAAAAAAAS…VMILRSRFLD (106 aa). The segment at residues 233–295 is a DNA-binding region (homeobox; TALE-type); that stretch reads ARRKRRNFNK…NKRIRYKKNI (63 aa). Positions 318–331 are enriched in polar residues; it reads VHGSQANSPSTPSS. Residues 318–347 form a disordered region; the sequence is VHGSQANSPSTPSSAGGYPSPCYQSDRRIQ.

The protein belongs to the TALE/PBX homeobox family. Forms a heterodimer with meis1; the interaction is necessary for neural fate induction.

The protein resides in the nucleus. Functionally, acts as a transcriptional activator in complex with isoform 2 of meis1, to induce posterior neural and neural crest gene expression, and thereby specify hindbrain and neural crest cell fate. Binds to a highly conserved region in the promoter of the neural crest gene zic3. Required for the nuclear transport or retention of meis1. The chain is Pre-B-cell leukemia transcription factor 1 from Xenopus tropicalis (Western clawed frog).